The following is a 149-amino-acid chain: 3-dehydroquinate dehydratase (149 aa).

Tyr26 acts as the Proton acceptor in catalysis. Asn77, His83, and Asp90 together coordinate substrate. The Proton donor role is filled by His103. Residues 104–105 and Arg114 contribute to the substrate site; that span reads LS.

It belongs to the type-II 3-dehydroquinase family. Homododecamer.

It carries out the reaction 3-dehydroquinate = 3-dehydroshikimate + H2O. It functions in the pathway metabolic intermediate biosynthesis; chorismate biosynthesis; chorismate from D-erythrose 4-phosphate and phosphoenolpyruvate: step 3/7. Its function is as follows. Catalyzes a trans-dehydration via an enolate intermediate. In Aeromonas hydrophila subsp. hydrophila (strain ATCC 7966 / DSM 30187 / BCRC 13018 / CCUG 14551 / JCM 1027 / KCTC 2358 / NCIMB 9240 / NCTC 8049), this protein is 3-dehydroquinate dehydratase.